We begin with the raw amino-acid sequence, 123 residues long: Ribosome-binding factor A (123 aa).

Belongs to the RbfA family. Monomer. Binds 30S ribosomal subunits, but not 50S ribosomal subunits or 70S ribosomes.

It localises to the cytoplasm. One of several proteins that assist in the late maturation steps of the functional core of the 30S ribosomal subunit. Associates with free 30S ribosomal subunits (but not with 30S subunits that are part of 70S ribosomes or polysomes). Required for efficient processing of 16S rRNA. May interact with the 5'-terminal helix region of 16S rRNA. This is Ribosome-binding factor A from Rickettsia bellii (strain OSU 85-389).